We begin with the raw amino-acid sequence, 232 residues long: UPF0173 metal-dependent hydrolase Msil_0741 (232 aa).

Belongs to the UPF0173 family.

This chain is UPF0173 metal-dependent hydrolase Msil_0741, found in Methylocella silvestris (strain DSM 15510 / CIP 108128 / LMG 27833 / NCIMB 13906 / BL2).